Here is a 439-residue protein sequence, read N- to C-terminus: GTPase Obg (439 aa).

Positions 1-159 (MAFVDQAQIE…RNLKLELKVL (159 aa)) constitute an Obg domain. One can recognise an OBG-type G domain in the interval 160-336 (ADVGLVGFPS…LMRLTADMLA (177 aa)). GTP-binding positions include 166–173 (GFPSAGKS), 191–195 (FTTLS), 213–216 (DLPG), 283–286 (TKMD), and 317–319 (SSI). Residues Ser173 and Thr193 each coordinate Mg(2+). A disordered region spans residues 338–357 (APAPESYRPETKNDTSEKSY). Positions 344 to 354 (YRPETKNDTSE) are enriched in basic and acidic residues. Residues 358–439 (TFKPETHDFT…NSDFVFEFSE (82 aa)) enclose the OCT domain.

This sequence belongs to the TRAFAC class OBG-HflX-like GTPase superfamily. OBG GTPase family. As to quaternary structure, monomer. The cofactor is Mg(2+).

It is found in the cytoplasm. An essential GTPase which binds GTP, GDP and possibly (p)ppGpp with moderate affinity, with high nucleotide exchange rates and a fairly low GTP hydrolysis rate. Plays a role in control of the cell cycle, stress response, ribosome biogenesis and in those bacteria that undergo differentiation, in morphogenesis control. This Leuconostoc mesenteroides subsp. mesenteroides (strain ATCC 8293 / DSM 20343 / BCRC 11652 / CCM 1803 / JCM 6124 / NCDO 523 / NBRC 100496 / NCIMB 8023 / NCTC 12954 / NRRL B-1118 / 37Y) protein is GTPase Obg.